Reading from the N-terminus, the 489-residue chain is Protein TOS4 (489 aa).

2 stretches are compositionally biased toward polar residues: residues 1–10 (MSSQFPSSPY) and 20–32 (NYKQ…SSNY). Positions 1 to 101 (MSSQFPSSPY…FSSKLSSPSR (101 aa)) are disordered. Phosphoserine is present on Ser40. Polar residues predominate over residues 56–68 (PSSSIGRVSSPVR). Over residues 89 to 100 (SPKFSSKLSSPS) the composition is skewed to low complexity. The residue at position 100 (Ser100) is a Phosphoserine. The 53-residue stretch at 118 to 170 (ITVGRNSSQCDVALCKNKFISRVHASITYLPQTNEVKIHCFSMNGLIVTYRKQ) folds into the FHA domain. Positions 316-366 (SSPLSSVSSVDHEEQTLRQDSLSSDKNPMTMKKPKLNKRVLPSKPKKSVKE) are disordered. Over residues 333 to 342 (RQDSLSSDKN) the composition is skewed to polar residues.

Belongs to the PLM2/TOS4 family. Post-translationally, phosphorylated by CDC28.

The protein resides in the nucleus. Functionally, binds to the promoters of genes with functions important for the G1/S (start) transition; primarily genes involved in pheromone response, polarized growth and transcription. This is Protein TOS4 (TOS4) from Saccharomyces cerevisiae (strain ATCC 204508 / S288c) (Baker's yeast).